The following is a 383-amino-acid chain: Acetylornithine deacetylase (383 aa).

A Zn(2+)-binding site is contributed by histidine 80. Aspartate 82 is an active-site residue. Position 112 (aspartate 112) interacts with Zn(2+). Residue glutamate 144 is part of the active site. Residues glutamate 145, glutamate 169, and histidine 355 each contribute to the Zn(2+) site.

It belongs to the peptidase M20A family. ArgE subfamily. In terms of assembly, homodimer. Requires Zn(2+) as cofactor. Co(2+) serves as cofactor. It depends on glutathione as a cofactor.

The protein localises to the cytoplasm. The enzyme catalyses N(2)-acetyl-L-ornithine + H2O = L-ornithine + acetate. Its pathway is amino-acid biosynthesis; L-arginine biosynthesis; L-ornithine from N(2)-acetyl-L-ornithine (linear): step 1/1. Its function is as follows. Catalyzes the hydrolysis of the amide bond of N(2)-acetylated L-amino acids. Cleaves the acetyl group from N-acetyl-L-ornithine to form L-ornithine, an intermediate in L-arginine biosynthesis pathway, and a branchpoint in the synthesis of polyamines. The polypeptide is Acetylornithine deacetylase (Shigella boydii serotype 18 (strain CDC 3083-94 / BS512)).